A 466-amino-acid polypeptide reads, in one-letter code: Collagenase 3 (466 aa).

The first 13 residues, 1–13 (ATFFLLSWTHCWS), serve as a signal peptide directing secretion. A propeptide spans 14–98 (LPLPYGDDDD…PRCGVPDVGV (85 aa)) (activation peptide). The short motif at 89–96 (PRCGVPDV) is the Cysteine switch element. C91 serves as a coordination point for Zn(2+). Residue N112 is glycosylated (N-linked (GlcNAc...) asparagine). D123 lines the Ca(2+) pocket. N147 carries N-linked (GlcNAc...) asparagine glycosylation. Residue D157 coordinates Ca(2+). 2 residues coordinate Zn(2+): H167 and D169. The interaction with TIMP2 stretch occupies residues 171-241 (YPFDGPSGLL…GALMFPIYTY (71 aa)). The Ca(2+) site is built by D174, G175, S177, and L179. Residue H182 coordinates Zn(2+). Ca(2+) is bound by residues N189, G191, and D193. H195 is a binding site for Zn(2+). The Ca(2+) site is built by D197, D198, and E200. H217 is a Zn(2+) binding site. The active site involves E218. 3 residues coordinate Zn(2+): H221, H227, and M235. The disordered stretch occupies residues 258-279 (QSLYGPGDEDPNPKHPKTPEKC). The tract at residues 263–466 (PGDEDPNPKH…VMPTNSLLWC (204 aa)) is interaction with collagen. The segment covering 268–279 (PNPKHPKTPEKC) has biased composition (basic and acidic residues). Hemopexin repeat units follow at residues 276–325 (PEKC…WPEL), 326–372 (PNHV…GFPK), 374–422 (VKRL…FPGI), and 423–466 (GDKV…LLWC). An intrachain disulfide couples C279 to C466. Residues D286, I288, D330, and A332 each contribute to the Ca(2+) site. The residue at position 361 (Y361) is a Phosphotyrosine; by PKDCC. Residues S378 and A380 each coordinate Ca(2+). Residue N404 is glycosylated (N-linked (GlcNAc...) asparagine). Positions 427 and 429 each coordinate Ca(2+).

This sequence belongs to the peptidase M10A family. Ca(2+) serves as cofactor. It depends on Zn(2+) as a cofactor. Post-translationally, the proenzyme is activated by removal of the propeptide; this cleavage can be effected by other matrix metalloproteinases, such as MMP2, MMP3 and MMP14 and may involve several cleavage steps. Cleavage can also be autocatalytic, after partial maturation by another protease or after treatment with 4-aminophenylmercuric acetate (APMA) (in vitro). N-glycosylated. In terms of processing, tyrosine phosphorylated by PKDCC/VLK.

It is found in the secreted. It localises to the extracellular space. The protein localises to the extracellular matrix. In terms of biological role, plays a role in the degradation of extracellular matrix proteins including fibrillar collagen, fibronectin, TNC and ACAN. Cleaves triple helical collagens, including type I, type II and type III collagen, but has the highest activity with soluble type II collagen. Can also degrade collagen type IV, type XIV and type X. May also function by activating or degrading key regulatory proteins, such as TGFB1 and CCN2. Plays a role in wound healing, tissue remodeling, cartilage degradation, bone development, bone mineralization and ossification. Required for normal embryonic bone development and ossification. Plays a role in the healing of bone fractures via endochondral ossification. Plays a role in wound healing, probably by a mechanism that involves proteolytic activation of TGFB1 and degradation of CCN2. Plays a role in keratinocyte migration during wound healing. May play a role in cell migration and in tumor cell invasion. The chain is Collagenase 3 (Mmp13) from Rattus norvegicus (Rat).